Reading from the N-terminus, the 532-residue chain is uncharacterized protein (532 aa).

14 consecutive transmembrane segments (helical) span residues 25-45, 65-85, 109-129, 134-154, 179-199, 203-223, 248-268, 302-322, 344-364, 371-391, 392-412, 425-445, 459-479, and 494-514; these read ITKI…GDVG, SGFP…NHHT, AVPI…QVAA, LFPF…MLPS, KGAS…AGSL, IILG…RQNE, LLLF…SGGE, VPYI…EKIT, KPVN…QVFS, SLAV…FPAI, AVGA…PRYG, AAVA…DKLR, SAVL…TGRG, and AVFI…LNSV.

It belongs to the polysaccharide synthase family.

The protein resides in the cell membrane. This is an uncharacterized protein from Bacillus subtilis (strain 168).